Reading from the N-terminus, the 361-residue chain is Chorismate synthase (361 aa).

Residues arginine 48 and arginine 54 each coordinate NADP(+). FMN contacts are provided by residues 125 to 127, 238 to 239, glycine 278, 293 to 297, and arginine 319; these read RSS, NA, and KPTSS.

The protein belongs to the chorismate synthase family. Homotetramer. Requires FMNH2 as cofactor.

It catalyses the reaction 5-O-(1-carboxyvinyl)-3-phosphoshikimate = chorismate + phosphate. It participates in metabolic intermediate biosynthesis; chorismate biosynthesis; chorismate from D-erythrose 4-phosphate and phosphoenolpyruvate: step 7/7. Functionally, catalyzes the anti-1,4-elimination of the C-3 phosphate and the C-6 proR hydrogen from 5-enolpyruvylshikimate-3-phosphate (EPSP) to yield chorismate, which is the branch point compound that serves as the starting substrate for the three terminal pathways of aromatic amino acid biosynthesis. This reaction introduces a second double bond into the aromatic ring system. The protein is Chorismate synthase of Salmonella typhi.